The sequence spans 118 residues: Ribonuclease P protein component (118 aa).

It belongs to the RnpA family. Consists of a catalytic RNA component (M1 or rnpB) and a protein subunit.

It carries out the reaction Endonucleolytic cleavage of RNA, removing 5'-extranucleotides from tRNA precursor.. Its function is as follows. RNaseP catalyzes the removal of the 5'-leader sequence from pre-tRNA to produce the mature 5'-terminus. It can also cleave other RNA substrates such as 4.5S RNA. The protein component plays an auxiliary but essential role in vivo by binding to the 5'-leader sequence and broadening the substrate specificity of the ribozyme. The polypeptide is Ribonuclease P protein component (Shewanella oneidensis (strain ATCC 700550 / JCM 31522 / CIP 106686 / LMG 19005 / NCIMB 14063 / MR-1)).